The sequence spans 303 residues: Ribonuclease Z (303 aa).

7 residues coordinate Zn(2+): His61, His63, Asp65, His66, His138, Asp206, and His265. The active-site Proton acceptor is Asp65.

The protein belongs to the RNase Z family. Homodimer. The cofactor is Zn(2+).

It catalyses the reaction Endonucleolytic cleavage of RNA, removing extra 3' nucleotides from tRNA precursor, generating 3' termini of tRNAs. A 3'-hydroxy group is left at the tRNA terminus and a 5'-phosphoryl group is left at the trailer molecule.. Its function is as follows. Zinc phosphodiesterase, which displays some tRNA 3'-processing endonuclease activity. Probably involved in tRNA maturation, by removing a 3'-trailer from precursor tRNA. In Agathobacter rectalis (strain ATCC 33656 / DSM 3377 / JCM 17463 / KCTC 5835 / VPI 0990) (Eubacterium rectale), this protein is Ribonuclease Z.